We begin with the raw amino-acid sequence, 951 residues long: Valine--tRNA ligase (951 aa).

Residues 42-52 (PNVTGSLHMGH) carry the 'HIGH' region motif. The 'KMSKS' region motif lies at 554-558 (KMSKS). Residue Lys-557 coordinates ATP. A coiled-coil region spans residues 880-944 (AGLINKEDEL…AEAKAKLIEQ (65 aa)).

This sequence belongs to the class-I aminoacyl-tRNA synthetase family. ValS type 1 subfamily. As to quaternary structure, monomer.

It is found in the cytoplasm. The catalysed reaction is tRNA(Val) + L-valine + ATP = L-valyl-tRNA(Val) + AMP + diphosphate. Functionally, catalyzes the attachment of valine to tRNA(Val). As ValRS can inadvertently accommodate and process structurally similar amino acids such as threonine, to avoid such errors, it has a 'posttransfer' editing activity that hydrolyzes mischarged Thr-tRNA(Val) in a tRNA-dependent manner. This Shigella flexneri protein is Valine--tRNA ligase.